We begin with the raw amino-acid sequence, 1182 residues long: DNA-directed RNA polymerase subunit beta' (1182 aa).

4 residues coordinate Zn(2+): C59, C61, C74, and C77. Positions 449, 451, and 453 each coordinate Mg(2+). Zn(2+) contacts are provided by C794, C868, C875, and C878.

It belongs to the RNA polymerase beta' chain family. As to quaternary structure, the RNAP catalytic core consists of 2 alpha, 1 beta, 1 beta' and 1 omega subunit. When a sigma factor is associated with the core the holoenzyme is formed, which can initiate transcription. It depends on Mg(2+) as a cofactor. Zn(2+) serves as cofactor.

It carries out the reaction RNA(n) + a ribonucleoside 5'-triphosphate = RNA(n+1) + diphosphate. In terms of biological role, DNA-dependent RNA polymerase catalyzes the transcription of DNA into RNA using the four ribonucleoside triphosphates as substrates. The sequence is that of DNA-directed RNA polymerase subunit beta' from Clostridium acetobutylicum (strain ATCC 824 / DSM 792 / JCM 1419 / IAM 19013 / LMG 5710 / NBRC 13948 / NRRL B-527 / VKM B-1787 / 2291 / W).